The chain runs to 177 residues: Putative adenylate kinase (177 aa).

Glycine 10, glycine 12, lysine 13, threonine 14, and threonine 15 together coordinate ATP. Residues 30–50 (SLRDYAIEKGIGEMKGDELEV) are NMP. The interval 99–109 (ERGYSREKVGE) is LID. ATP contacts are provided by arginine 100 and lysine 138.

Belongs to the adenylate kinase family. AK6 subfamily. Interacts with uS11. Not a structural component of 40S pre-ribosomes, but transiently interacts with them by binding to uS11.

It carries out the reaction AMP + ATP = 2 ADP. It catalyses the reaction ATP + H2O = ADP + phosphate + H(+). In terms of biological role, broad-specificity nucleoside monophosphate (NMP) kinase that catalyzes the reversible transfer of the terminal phosphate group between nucleoside triphosphates and monophosphates. Also has ATPase activity. Involved in the late maturation steps of the 30S ribosomal particles, specifically 16S rRNA maturation. While NMP activity is not required for ribosome maturation, ATPase activity is. Associates transiently with small ribosomal subunit protein uS11. ATP hydrolysis breaks the interaction with uS11. May temporarily remove uS11 from the ribosome to enable a conformational change of the ribosomal RNA that is needed for the final maturation step of the small ribosomal subunit. The sequence is that of Putative adenylate kinase from Thermococcus gammatolerans (strain DSM 15229 / JCM 11827 / EJ3).